The following is a 433-amino-acid chain: MKIIIFVCFILIFYLPIQKKHVNSQQQGIDSDDGDAESFFNKSYSEHQSALEQKIFRGYNPKNRPMKNASFPTIVDVHWHIIHVSINQREQTMTVHGHIYMRWFDEFLVWDPKDFNNIQYARVKKWQVWQPKIKVSNSASGLGSAFDFSTSAHVIIQMMGKDRAKVEMYPTFSIKVGCAFDFTDYPYDLNKCAINLFSTSTMADVQLQNLYAIPPTLSFGWEEQKMKRIISDFKIQNVSSSALYYTNGNITSSAPITGFDLGSTWSMLAVTVSFVRHSPLFEAAVVTPCIVVASLISMTFFIDSLSSTFLLMMLHFYVQLIFLHDLVEKLPLSVSEIPFCIKLIGILMYTNGLTLVLHSSLLCGSYYKCPVPQQLNKIFVIEEYIPNTFKEKVQIKKEESNKSWRDLMKLIRPIIGFVLIILLICMFFVCLLL.

The first 24 residues, Met1–Ser24, serve as a signal peptide directing secretion. Asn41 and Asn68 each carry an N-linked (GlcNAc...) asparagine glycan. An intrachain disulfide couples Cys178 to Cys192. Residues Asn237 and Asn249 are each glycosylated (N-linked (GlcNAc...) asparagine). 4 helical membrane passes run Glu282–Ile302, Ser307–Val327, Ile337–Leu357, and Pro413–Leu433.

Belongs to the ligand-gated ion channel (TC 1.A.9) family. Acetylcholine receptor (TC 1.A.9.1) subfamily. In terms of tissue distribution, expressed in coelomocytes.

Its subcellular location is the cytoplasmic vesicle membrane. In terms of biological role, thought to regulate endocytosis in coelomocytes through modulation of phospholipase C activity. Possible acetylcholine receptor. This Caenorhabditis elegans protein is Acetylcholine receptor-like protein cup-4 (cup-4).